The chain runs to 91 residues: PqqA binding protein 1 (91 aa).

This sequence belongs to the PqqD family. Monomer. Interacts with PqqE.

The protein operates within cofactor biosynthesis; pyrroloquinoline quinone biosynthesis. Its function is as follows. Functions as a PqqA binding protein and presents PqqA to PqqE, in the pyrroloquinoline quinone (PQQ) biosynthetic pathway. This is PqqA binding protein 1 (pqqD1) from Pseudomonas putida (strain ATCC 47054 / DSM 6125 / CFBP 8728 / NCIMB 11950 / KT2440).